The chain runs to 514 residues: Antiseptic resistance protein (514 aa).

Residues 1–23 are Cytoplasmic-facing; sequence MISFFTKTTDMMTSKKRWTALVV. A helical transmembrane segment spans residues 24-41; sequence LAVSLFVVTMDMTILIMA. The Extracellular segment spans residues 42-57; the sequence is LPELVRELEPSGTQQL. The helical transmembrane segment at 58–75 threads the bilayer; the sequence is WIVDIYSLVLAGFIIPLS. The Cytoplasmic portion of the chain corresponds to 76–86; the sequence is AFADKWGRKKA. Residues 87-104 traverse the membrane as a helical segment; that stretch reads LLTGFALFGLVSLAIFFA. At 105-112 the chain is on the extracellular side; it reads ESAEFVIA. A helical transmembrane segment spans residues 113–130; that stretch reads IRFLLGIAGALIMPTTLS. The Cytoplasmic portion of the chain corresponds to 131–146; the sequence is MIRVIFENPKERATAL. Residues 147–164 form a helical membrane-spanning segment; the sequence is AVWSIASSIGAVFGPIIG. Over 165-172 the chain is Extracellular; that stretch reads GALLEQFS. A helical membrane pass occupies residues 173–190; sequence WHSAFLINVPFAIIAVVA. The Cytoplasmic segment spans residues 191–207; that stretch reads GLFLLPESKLSKEKSHS. A helical transmembrane segment spans residues 208–225; the sequence is WDIPSTILSIAGMIGLVW. The Extracellular segment spans residues 226-237; sequence SIKEFSKEGLAD. A helical membrane pass occupies residues 238 to 255; the sequence is IIPWVVIVLAITMIVIFV. The Cytoplasmic segment spans residues 256–278; it reads KRNLSSSDPMLDVRLFKKRSFSA. Residues 279-295 traverse the membrane as a helical segment; the sequence is GTIAAFMTMFAMASVLL. Over 296–315 the chain is Extracellular; sequence LASQWLQVVEELSPFKAGLY. The chain crosses the membrane as a helical span at residues 316–333; it reads LLPMAIGDMVFAPIAPGL. Topologically, residues 334 to 341 are cytoplasmic; that stretch reads AARFGPKI. The helical transmembrane segment at 342–360 threads the bilayer; it reads VLPSGIGIAAIGMFIMYFF. The Extracellular portion of the chain corresponds to 361-369; that stretch reads GHPLSYSTM. Residues 370 to 387 form a helical membrane-spanning segment; it reads ALALILVGAGMASLAVAS. Topologically, residues 388–408 are cytoplasmic; it reads ALIMLETPTSKAGNAAAVEES. A helical transmembrane segment spans residues 409-426; sequence MYDLGNVFGVAVLGSLSS. The Extracellular portion of the chain corresponds to 427–481; it reads MLYRVFLDISSFSSKGIVGDLAHVAEESVVGAVEVAKATGIKQLANEAVTSFNDA. A helical transmembrane segment spans residues 482–499; that stretch reads FVATALVGGIIMIIISIV. Residues 500 to 514 lie on the Cytoplasmic side of the membrane; sequence VYLLIPKSLDITKQK.

It belongs to the major facilitator superfamily.

The protein resides in the cell membrane. Confers export-mediated resistance against antiseptic and disinfectant compounds such as intercalating dyes, quaternary ammonium salts and diamidines. In Staphylococcus aureus (strain Mu50 / ATCC 700699), this protein is Antiseptic resistance protein (qacA).